A 500-amino-acid polypeptide reads, in one-letter code: Replication factor C large subunit (500 aa).

44-51 (GSPGVGKT) serves as a coordination point for ATP. The segment at 443–500 (HAADDLGASDGETTNASGTASSSGDDGDADGTTDGDGSDANDGNDDDDDGQAGLSDFV) is disordered. A compositionally biased stretch (low complexity) spans 455-466 (TTNASGTASSSG). Acidic residues predominate over residues 467 to 492 (DDGDADGTTDGDGSDANDGNDDDDDG).

The protein belongs to the activator 1 small subunits family. RfcL subfamily. Heteromultimer composed of small subunits (RfcS) and large subunits (RfcL).

In terms of biological role, part of the RFC clamp loader complex which loads the PCNA sliding clamp onto DNA. The protein is Replication factor C large subunit of Halorubrum lacusprofundi (strain ATCC 49239 / DSM 5036 / JCM 8891 / ACAM 34).